The sequence spans 263 residues: tRNA uridine(34) hydroxylase (263 aa).

The region spanning 129–223 (EGREIALLDT…YFEEVGGAHY (95 aa)) is the Rhodanese domain. The Cysteine persulfide intermediate role is filled by cysteine 183.

This sequence belongs to the TrhO family.

The catalysed reaction is uridine(34) in tRNA + AH2 + O2 = 5-hydroxyuridine(34) in tRNA + A + H2O. Catalyzes oxygen-dependent 5-hydroxyuridine (ho5U) modification at position 34 in tRNAs. The chain is tRNA uridine(34) hydroxylase from Variovorax paradoxus (strain S110).